Here is a 314-residue protein sequence, read N- to C-terminus: Acetyl-coenzyme A carboxylase carboxyl transferase subunit beta (314 aa).

Residues 37 to 307 (LWQKCPACDT…MSLPSIDSEA (271 aa)) enclose the CoA carboxyltransferase N-terminal domain. Positions 41, 44, 60, and 63 each coordinate Zn(2+). The segment at 41–63 (CPACDTLTYTKDLQQNWQVCPSC) adopts a C4-type zinc-finger fold.

The protein belongs to the AccD/PCCB family. As to quaternary structure, acetyl-CoA carboxylase is a heterohexamer composed of biotin carboxyl carrier protein (AccB), biotin carboxylase (AccC) and two subunits each of ACCase subunit alpha (AccA) and ACCase subunit beta (AccD). Requires Zn(2+) as cofactor.

The protein localises to the cytoplasm. It catalyses the reaction N(6)-carboxybiotinyl-L-lysyl-[protein] + acetyl-CoA = N(6)-biotinyl-L-lysyl-[protein] + malonyl-CoA. It participates in lipid metabolism; malonyl-CoA biosynthesis; malonyl-CoA from acetyl-CoA: step 1/1. Functionally, component of the acetyl coenzyme A carboxylase (ACC) complex. Biotin carboxylase (BC) catalyzes the carboxylation of biotin on its carrier protein (BCCP) and then the CO(2) group is transferred by the transcarboxylase to acetyl-CoA to form malonyl-CoA. This chain is Acetyl-coenzyme A carboxylase carboxyl transferase subunit beta, found in Synechococcus sp. (strain JA-2-3B'a(2-13)) (Cyanobacteria bacterium Yellowstone B-Prime).